The following is a 784-amino-acid chain: Copal-8-ol diphosphate hydratase TPSSA9, chloroplastic (784 aa).

Substrate is bound at residue arginine 240. Positions 372 and 374 each coordinate Mg(2+). Positions aspartate 372–aspartate 375 match the DXDD motif motif. Residue arginine 459 coordinates substrate.

This sequence belongs to the terpene synthase family.

It localises to the plastid. The protein resides in the chloroplast. It carries out the reaction (2E,6E,10E)-geranylgeranyl diphosphate + H2O = 8-hydroxycopalyl diphosphate. The protein operates within secondary metabolite biosynthesis; terpenoid biosynthesis. Functionally, involved in the biosynthesis of labdane-type diterpenoid including sclareol, a diterpene-diol that is used as fragrance and flavoring, and has anticancer effects (able to kill leukemic and colon cancer cells by apoptosis). Sclareol can also be used as synthesis precursor of ambergris substitution fragance products such as ambrox. Terpene synthase that produces 8-hydroxycopalyl diphosphate from geranylgeranyl diphosphate (GGPP). The protein is Copal-8-ol diphosphate hydratase TPSSA9, chloroplastic of Salvia sclarea (Clary sage).